Here is a 357-residue protein sequence, read N- to C-terminus: Alanine racemase (357 aa).

K33 functions as the Proton acceptor; specific for D-alanine in the catalytic mechanism. K33 carries the post-translational modification N6-(pyridoxal phosphate)lysine. Residue R129 coordinates substrate. Residue Y253 is the Proton acceptor; specific for L-alanine of the active site. M301 is a substrate binding site.

The protein belongs to the alanine racemase family. The cofactor is pyridoxal 5'-phosphate.

It carries out the reaction L-alanine = D-alanine. The protein operates within amino-acid biosynthesis; D-alanine biosynthesis; D-alanine from L-alanine: step 1/1. Functionally, catalyzes the interconversion of L-alanine and D-alanine. May also act on other amino acids. The chain is Alanine racemase (alr) from Pseudomonas savastanoi pv. phaseolicola (strain 1448A / Race 6) (Pseudomonas syringae pv. phaseolicola (strain 1448A / Race 6)).